The primary structure comprises 324 residues: MKPSIILYKTLPDDLLHRLEAHFTVTQVPNLHPETVARHAQAFASAQGLLGASETVNRALLEKMPALRAASTISVGYDNVEVDALTARKIVLMHTPAVLTETVADTVMALMLATARRVVDVAERVKAGEWTESIGPAWFGVDVHHKTLGIVGMGRIGMALAQRAHFGFTMPVLYHARRRHQEAEDRFNARYCDLDTLLQEADFVCVILPLTAETRHLFGATQFARMKSSAIFINAGRGPVVDENALIAALQNGEIYAAGLDVFEQEPLSVDSPLLNMSNVVAVPHIGSATHETRYNMMACAVDNLIDALQGKIEKNCVNPQAAG.

Catalysis depends on residues Arg237 and Glu266. His285 acts as the Proton donor in catalysis.

Belongs to the D-isomer specific 2-hydroxyacid dehydrogenase family. GhrB subfamily. In terms of assembly, homodimer.

The protein resides in the cytoplasm. The enzyme catalyses glycolate + NADP(+) = glyoxylate + NADPH + H(+). It catalyses the reaction (R)-glycerate + NAD(+) = 3-hydroxypyruvate + NADH + H(+). The catalysed reaction is (R)-glycerate + NADP(+) = 3-hydroxypyruvate + NADPH + H(+). In terms of biological role, catalyzes the NADPH-dependent reduction of glyoxylate and hydroxypyruvate into glycolate and glycerate, respectively. In Salmonella dublin (strain CT_02021853), this protein is Glyoxylate/hydroxypyruvate reductase B.